The primary structure comprises 249 residues: Cytokine-inducible SH2-containing protein (249 aa).

A disordered region spans residues 41 to 64; that stretch reads AFPEEPAPTFAAPEPDGSAPQTRD. The 82-residue stretch at 84–165 folds into the SH2 domain; sequence WYWGSITASE…PDVVSLIQHY (82 aa). The SOCS box domain maps to 200–248; sequence KLLRPLGRRDSIPSLQHLCRLRINRCTTEVERLPLPRRMGDYLKQYPFQ.

It participates in protein modification; protein ubiquitination. Its function is as follows. SOCS family proteins form part of a classical negative feedback system that regulates cytokine signal transduction. CIS is involved in the negative regulation of cytokines that signal through the JAK-STAT5 pathway such as erythropoietin, prolactin and interleukin 3 (IL3) receptor. Inhibits STAT5 trans-activation by suppressing its tyrosine phosphorylation. May be a substrate-recognition component of a SCF-like ECS (Elongin BC-CUL2/5-SOCS-box protein) E3 ubiquitin-protein ligase complex which mediates the ubiquitination and subsequent proteasomal degradation of target proteins. The chain is Cytokine-inducible SH2-containing protein (CISH) from Gallus gallus (Chicken).